The chain runs to 260 residues: Mediator of RNA polymerase II transcription subunit 8 (260 aa).

Belongs to the Mediator complex subunit 8 family. In terms of assembly, component of the Mediator complex.

The protein localises to the nucleus. In terms of biological role, component of the Mediator complex, a coactivator involved in the regulated transcription of nearly all RNA polymerase II-dependent genes. Mediator functions as a bridge to convey information from gene-specific regulatory proteins to the basal RNA polymerase II transcription machinery. Mediator is recruited to promoters by direct interactions with regulatory proteins and serves as a scaffold for the assembly of a functional preinitiation complex with RNA polymerase II and the general transcription factors. This Emericella nidulans (strain FGSC A4 / ATCC 38163 / CBS 112.46 / NRRL 194 / M139) (Aspergillus nidulans) protein is Mediator of RNA polymerase II transcription subunit 8 (med8).